Here is a 311-residue protein sequence, read N- to C-terminus: Putative dihydroorotate dehydrogenase A (fumarate) (311 aa).

Substrate-binding positions include Lys-45, Asn-69 to Leu-73, and Asn-128. Lys-45 to Thr-46 lines the FMN pocket. Position 128 (Asn-128) interacts with FMN. Cys-131 (nucleophile) is an active-site residue. FMN is bound by residues Lys-165 and Val-193. Asn-194–Ser-195 lines the substrate pocket. Residues Gly-220, Gly-248–Gly-249, and Gly-270–Thr-271 contribute to the FMN site.

Belongs to the dihydroorotate dehydrogenase family. Type 1 subfamily. As to quaternary structure, homodimer. Requires FMN as cofactor.

The protein resides in the cytoplasm. The catalysed reaction is (S)-dihydroorotate + fumarate = orotate + succinate. It functions in the pathway pyrimidine metabolism; UMP biosynthesis via de novo pathway. In terms of biological role, catalyzes the conversion of dihydroorotate to orotate with fumarate as the electron acceptor. The chain is Putative dihydroorotate dehydrogenase A (fumarate) (pyrD) from Streptococcus pyogenes serotype M3 (strain SSI-1).